Here is a 459-residue protein sequence, read N- to C-terminus: UDP-N-acetylmuramoylalanine--D-glutamate ligase (459 aa).

119–125 provides a ligand contact to ATP; the sequence is GTNGKTT.

The protein belongs to the MurCDEF family.

The protein resides in the cytoplasm. It catalyses the reaction UDP-N-acetyl-alpha-D-muramoyl-L-alanine + D-glutamate + ATP = UDP-N-acetyl-alpha-D-muramoyl-L-alanyl-D-glutamate + ADP + phosphate + H(+). The protein operates within cell wall biogenesis; peptidoglycan biosynthesis. In terms of biological role, cell wall formation. Catalyzes the addition of glutamate to the nucleotide precursor UDP-N-acetylmuramoyl-L-alanine (UMA). The protein is UDP-N-acetylmuramoylalanine--D-glutamate ligase of Lacticaseibacillus paracasei (strain ATCC 334 / BCRC 17002 / CCUG 31169 / CIP 107868 / KCTC 3260 / NRRL B-441) (Lactobacillus paracasei).